We begin with the raw amino-acid sequence, 352 residues long: Protein O-mannose kinase (352 aa).

Topologically, residues 1-16 are cytoplasmic; it reads MERKPSVCRKSGSWNC. The helical; Signal-anchor for type II membrane protein transmembrane segment at 17–37 threads the bilayer; the sequence is LLVLFLLLLFTVVSVNFLLYM. At 38–352 the chain is on the lumenal side; that stretch reads YIDQMYAPSR…MAVAETREML (315 aa). In terms of domain architecture, Protein kinase spans 82–352; the sequence is VRKLKLVGEG…MAVAETREML (271 aa).

The protein belongs to the protein kinase superfamily. Ser/Thr protein kinase family. STKL subfamily.

It is found in the endoplasmic reticulum membrane. It catalyses the reaction 3-O-[beta-D-GalNAc-(1-&gt;3)-beta-D-GlcNAc-(1-&gt;4)-alpha-D-Man]-L-Thr-[protein] + ATP = 3-O-[beta-D-GalNAc-(1-&gt;3)-beta-D-GlcNAc-(1-&gt;4)-(O-6-P-alpha-D-Man)]-Thr-[protein] + ADP + H(+). Functionally, protein O-mannose kinase that specifically mediates phosphorylation at the 6-position of an O-mannose of the trisaccharide (N-acetylgalactosamine (GalNAc)-beta-1,3-N-acetylglucosamine (GlcNAc)-beta-1,4-mannose) to generate phosphorylated O-mannosyl trisaccharide (N-acetylgalactosamine-beta-1,3-N-acetylglucosamine-beta-1,4-(phosphate-6-)mannose). Phosphorylated O-mannosyl trisaccharide is a carbohydrate structure present in alpha-dystroglycan (dag1), which is required for binding laminin G-like domain-containing extracellular proteins with high affinity. Only shows kinase activity when the GalNAc-beta-3-GlcNAc-beta-terminus is linked to the 4-position of O-mannose, suggesting that this disaccharide serves as the substrate recognition motif. In Xenopus laevis (African clawed frog), this protein is Protein O-mannose kinase (pomk).